The following is a 635-amino-acid chain: DNA-directed RNA polymerase subunit gamma (635 aa).

Zn(2+)-binding residues include Cys74, Cys76, Cys89, and Cys92. Asp471, Asp473, and Asp475 together coordinate Mg(2+).

The protein belongs to the RNA polymerase beta' chain family. RpoC1 subfamily. As to quaternary structure, in cyanobacteria the RNAP catalytic core is composed of 2 alpha, 1 beta, 1 beta', 1 gamma and 1 omega subunit. When a sigma factor is associated with the core the holoenzyme is formed, which can initiate transcription. It depends on Mg(2+) as a cofactor. Zn(2+) serves as cofactor.

It catalyses the reaction RNA(n) + a ribonucleoside 5'-triphosphate = RNA(n+1) + diphosphate. DNA-dependent RNA polymerase catalyzes the transcription of DNA into RNA using the four ribonucleoside triphosphates as substrates. This chain is DNA-directed RNA polymerase subunit gamma, found in Prochlorococcus marinus (strain NATL1A).